The primary structure comprises 540 residues: Chaperonin GroEL 2 (540 aa).

ATP-binding positions include 29-32, 86-90, Gly413, 476-478, and Asp492; these read TLGP, DGTTT, and NAA.

Belongs to the chaperonin (HSP60) family. As to quaternary structure, forms a cylinder of 14 subunits composed of two heptameric rings stacked back-to-back. Interacts with the co-chaperonin GroES.

It localises to the cytoplasm. The catalysed reaction is ATP + H2O + a folded polypeptide = ADP + phosphate + an unfolded polypeptide.. Its function is as follows. Together with its co-chaperonin GroES, plays an essential role in assisting protein folding. The GroEL-GroES system forms a nano-cage that allows encapsulation of the non-native substrate proteins and provides a physical environment optimized to promote and accelerate protein folding. The chain is Chaperonin GroEL 2 from Streptomyces albus G.